The chain runs to 194 residues: Imidazoleglycerol-phosphate dehydratase (194 aa).

This sequence belongs to the imidazoleglycerol-phosphate dehydratase family.

The protein resides in the cytoplasm. It catalyses the reaction D-erythro-1-(imidazol-4-yl)glycerol 3-phosphate = 3-(imidazol-4-yl)-2-oxopropyl phosphate + H2O. It participates in amino-acid biosynthesis; L-histidine biosynthesis; L-histidine from 5-phospho-alpha-D-ribose 1-diphosphate: step 6/9. The chain is Imidazoleglycerol-phosphate dehydratase from Limosilactobacillus fermentum (strain NBRC 3956 / LMG 18251) (Lactobacillus fermentum).